We begin with the raw amino-acid sequence, 224 residues long: UPF0758 protein SPO0054 (224 aa).

An MPN domain is found at V102 to L224. Residues H173, H175, and D186 each coordinate Zn(2+). The JAMM motif signature appears at H173 to D186.

Belongs to the UPF0758 family.

This chain is UPF0758 protein SPO0054, found in Ruegeria pomeroyi (strain ATCC 700808 / DSM 15171 / DSS-3) (Silicibacter pomeroyi).